A 547-amino-acid polypeptide reads, in one-letter code: Chaperonin GroEL (547 aa).

ATP is bound by residues 30-33 (TLGP), K51, 87-91 (DGTTT), G414, 478-480 (NAA), and D494.

This sequence belongs to the chaperonin (HSP60) family. Forms a cylinder of 14 subunits composed of two heptameric rings stacked back-to-back. Interacts with the co-chaperonin GroES.

The protein resides in the cytoplasm. The enzyme catalyses ATP + H2O + a folded polypeptide = ADP + phosphate + an unfolded polypeptide.. Together with its co-chaperonin GroES, plays an essential role in assisting protein folding. The GroEL-GroES system forms a nano-cage that allows encapsulation of the non-native substrate proteins and provides a physical environment optimized to promote and accelerate protein folding. The chain is Chaperonin GroEL from Klebsiella pneumoniae.